A 233-amino-acid chain; its full sequence is Octanoyltransferase (233 aa).

A BPL/LPL catalytic domain is found at 34–214 (GQAPSTVLLL…EFSAREATLI (181 aa)). Residues 72 to 79 (RGGKLTWH), 144 to 146 (AIG), and 157 to 159 (GFS) each bind substrate. C175 functions as the Acyl-thioester intermediate in the catalytic mechanism.

This sequence belongs to the LipB family.

The protein localises to the cytoplasm. The enzyme catalyses octanoyl-[ACP] + L-lysyl-[protein] = N(6)-octanoyl-L-lysyl-[protein] + holo-[ACP] + H(+). It participates in protein modification; protein lipoylation via endogenous pathway; protein N(6)-(lipoyl)lysine from octanoyl-[acyl-carrier-protein]: step 1/2. Functionally, catalyzes the transfer of endogenously produced octanoic acid from octanoyl-acyl-carrier-protein onto the lipoyl domains of lipoate-dependent enzymes. Lipoyl-ACP can also act as a substrate although octanoyl-ACP is likely to be the physiological substrate. The polypeptide is Octanoyltransferase (Renibacterium salmoninarum (strain ATCC 33209 / DSM 20767 / JCM 11484 / NBRC 15589 / NCIMB 2235)).